A 310-amino-acid polypeptide reads, in one-letter code: tRNA dimethylallyltransferase (310 aa).

Position 10 to 17 (10 to 17) interacts with ATP; that stretch reads GPTAVGKS. Residue 12–17 participates in substrate binding; sequence TAVGKS. The interval 35 to 38 is interaction with substrate tRNA; that stretch reads DSMQ.

Belongs to the IPP transferase family. As to quaternary structure, monomer. Mg(2+) is required as a cofactor.

It carries out the reaction adenosine(37) in tRNA + dimethylallyl diphosphate = N(6)-dimethylallyladenosine(37) in tRNA + diphosphate. In terms of biological role, catalyzes the transfer of a dimethylallyl group onto the adenine at position 37 in tRNAs that read codons beginning with uridine, leading to the formation of N6-(dimethylallyl)adenosine (i(6)A). The protein is tRNA dimethylallyltransferase of Clostridium perfringens (strain SM101 / Type A).